A 628-amino-acid chain; its full sequence is MBT domain-containing protein 1 (628 aa).

The interval methionine 1–asparagine 31 is disordered. The FCS-type zinc-finger motif lies at proline 45 to arginine 80. 4 residues coordinate Zn(2+): cysteine 54, cysteine 57, cysteine 74, and cysteine 78. Lysine 115 is modified (N6-acetyllysine). 4 MBT repeats span residues phenylalanine 141–proline 245, threonine 253–arginine 350, phenylalanine 351–proline 456, and phenylalanine 464–proline 560. Disordered stretches follow at residues proline 560–methionine 590 and asparagine 606–proline 628. Over residues serine 562–serine 573 the composition is skewed to low complexity. The span at lysine 574–methionine 590 shows a compositional bias: basic residues. A compositionally biased stretch (polar residues) spans glutamine 609 to alanine 620.

As to quaternary structure, monomer. Component of the NuA4 histone acetyltransferase complex. Interacts with EPC1; interaction is direct and promotes recruitment of MBTD1 into the NuA4 histone acetyltransferase complex.

The protein localises to the nucleus. The protein resides in the chromosome. In terms of biological role, chromatin reader component of the NuA4 histone acetyltransferase complex, a multiprotein complex involved in transcriptional activation of select genes principally by acetylation of nucleosomal histones H4 and H2A. The NuA4 complex plays a direct role in repair of DNA double-strand breaks (DSBs) by promoting homologous recombination (HR). MBTD1 specifically recognizes and binds monomethylated and dimethylated 'Lys-20' on histone H4 (H4K20me1 and H4K20me2, respectively). In the NuA4 complex, MBTD1 promotes recruitment of the complex to H4K20me marks by competing with TP53BP1 for binding to H4K20me. Following recruitment to H4K20me at DNA breaks, the NuA4 complex catalyzes acetylation of 'Lys-15' on histone H2A (H2AK15), blocking the ubiquitination mark required for TP53BP1 localization at DNA breaks, thereby promoting homologous recombination (HR). In Homo sapiens (Human), this protein is MBT domain-containing protein 1.